The following is a 346-amino-acid chain: Protein RecA (346 aa).

An ATP-binding site is contributed by G65 to T72.

This sequence belongs to the RecA family.

It is found in the cytoplasm. Functionally, can catalyze the hydrolysis of ATP in the presence of single-stranded DNA, the ATP-dependent uptake of single-stranded DNA by duplex DNA, and the ATP-dependent hybridization of homologous single-stranded DNAs. It interacts with LexA causing its activation and leading to its autocatalytic cleavage. This chain is Protein RecA, found in Enterococcus mundtii.